A 174-amino-acid chain; its full sequence is Major allergen Can f 1 (174 aa).

A signal peptide spans 1 to 18; sequence MKTLLLTIGFSLIAILQA. Cys-78 and Cys-169 form a disulfide bridge. The N-linked (GlcNAc...) asparagine glycan is linked to Asn-80.

It belongs to the calycin superfamily. Lipocalin family. As to expression, tongue epithelial tissue.

It localises to the secreted. The protein is Major allergen Can f 1 of Canis lupus familiaris (Dog).